We begin with the raw amino-acid sequence, 191 residues long: Putative resolvase L103 (191 aa).

Residues 11 to 30 constitute a DNA-binding region (H-T-H motif); sequence LEVLKVHYQTLYRMEEKGLI. One can recognise a Resolvase/invertase-type recombinase catalytic domain in the interval 59 to 191; it reads KGICYCRVSS…KKSGKLKAKK (133 aa). The stretch at 65–91 forms a coiled coil; that stretch reads RVSSKKQIKDLNRQVEYMEKNYPEYEI. Catalysis depends on Ser67, which acts as the O-(5'-phospho-DNA)-serine intermediate.

It belongs to the site-specific recombinase resolvase family.

Functionally, resolvase catalyzes the resolution (a site-specific recombination) of the cointegrated replicon to yield the final transposition products. This Acanthamoeba polyphaga (Amoeba) protein is Putative resolvase L103.